Reading from the N-terminus, the 201-residue chain is Large ribosomal subunit protein uL4 (201 aa).

Residues 43-73 are disordered; that stretch reads TRAQKTRSEVSGGGAKPWRQKGTGRARAGTT.

This sequence belongs to the universal ribosomal protein uL4 family. In terms of assembly, part of the 50S ribosomal subunit.

Functionally, one of the primary rRNA binding proteins, this protein initially binds near the 5'-end of the 23S rRNA. It is important during the early stages of 50S assembly. It makes multiple contacts with different domains of the 23S rRNA in the assembled 50S subunit and ribosome. Forms part of the polypeptide exit tunnel. The polypeptide is Large ribosomal subunit protein uL4 (Colwellia psychrerythraea (strain 34H / ATCC BAA-681) (Vibrio psychroerythus)).